A 328-amino-acid chain; its full sequence is Malate dehydrogenase (328 aa).

12–18 lines the NAD(+) pocket; it reads GAAGQIG. Substrate-binding residues include Arg93 and Arg99. NAD(+)-binding positions include Asn106, Gln113, and 130 to 132; that span reads TGN. The substrate site is built by Asn132 and Arg163. The Proton acceptor role is filled by His188.

Belongs to the LDH/MDH superfamily. MDH type 2 family.

It catalyses the reaction (S)-malate + NAD(+) = oxaloacetate + NADH + H(+). In terms of biological role, catalyzes the reversible oxidation of malate to oxaloacetate. This Kocuria rhizophila (strain ATCC 9341 / DSM 348 / NBRC 103217 / DC2201) protein is Malate dehydrogenase.